The following is a 237-amino-acid chain: F-box only protein 50 (237 aa).

Residues 31–231 (VFETKPFERN…VTDSSVIVKA (201 aa)) form the FBA domain. The disordered stretch occupies residues 40–82 (NLLQNPSPYGVNHTVPPPEPHRSGIPPPSDRPPQLEPEGNFSG). Residues 64-74 (IPPPSDRPPQL) are compositionally biased toward pro residues.

In terms of tissue distribution, expressed in nonspecific cytotoxic cells (NCC).

It localises to the cytoplasm. Functionally, may promote cell proliferation. The polypeptide is F-box only protein 50 (nccrp1) (Danio rerio (Zebrafish)).